Reading from the N-terminus, the 101-residue chain is opdI (101 aa).

The chain crosses the membrane as a helical span at residues 30-49 (GGMGGALKIVFLGMMTYFIA). The interval 56–101 (SQHPPTDFNAPVQSVPQRAQRPSDTRLQGPVLLASNHPSGDSASPE) is disordered. Composition is skewed to polar residues over residues 66–81 (PVQS…SDTR) and 91–101 (NHPSGDSASPE).

Its subcellular location is the membrane. Functionally, part of the gene cluster that mediates the biosynthesis of oxopyrrolidines, polyketide-amino acid hybrid compounds with feature structures of tetramic acid. Does not seem to play a role in oxopyrrolidines A and B biosynthesis. The sequence is that of opdI from Penicillium oxalicum (strain 114-2 / CGMCC 5302) (Penicillium decumbens).